Here is a 142-residue protein sequence, read N- to C-terminus: Hemoglobin subunit alpha-2 (142 aa).

Residues 2-142 enclose the Globin domain; that stretch reads VLSPADKTNV…VSTVLTSKYR (141 aa). His-59 provides a ligand contact to O2. His-88 lines the heme b pocket.

The protein belongs to the globin family. Heterotetramer of two alpha chains and two beta chains. As to expression, red blood cells.

In terms of biological role, involved in oxygen transport from the lung to the various peripheral tissues. The polypeptide is Hemoglobin subunit alpha-2 (Arctocephalus galapagoensis (Galapagoes fur seal)).